A 493-amino-acid polypeptide reads, in one-letter code: Cyclin-dependent kinase-like 2 (493 aa).

Residues 4-287 enclose the Protein kinase domain; that stretch reads YENLGLVGEG…CAELLHHDFF (284 aa). Residues 10–18 and K33 each bind ATP; that span reads VGEGSYGMV. The short motif at 45–51 is the [NKR]KIAxRE element; sequence KKIAMRE. D126 acts as the Proton acceptor in catalysis. 2 disordered regions span residues 311–338 and 363–384; these read VSLSKKSQNRKKEKEKDDSLGEERKTLV and GEKAEKGSRASNASCLHDSRTS. Over residues 320–336 the composition is skewed to basic and acidic residues; that stretch reads RKKEKEKDDSLGEERKT.

The protein belongs to the protein kinase superfamily. CMGC Ser/Thr protein kinase family. CDC2/CDKX subfamily.

The protein localises to the cytoplasm. It localises to the nucleus. It catalyses the reaction L-seryl-[protein] + ATP = O-phospho-L-seryl-[protein] + ADP + H(+). The enzyme catalyses L-threonyl-[protein] + ATP = O-phospho-L-threonyl-[protein] + ADP + H(+). This is Cyclin-dependent kinase-like 2 from Pongo abelii (Sumatran orangutan).